The sequence spans 69 residues: Trypsin/subtilisin inhibitor (69 aa).

The cysteines at positions 4 and 49 are disulfide-linked.

This sequence belongs to the protease inhibitor I13 (potato type I serine protease inhibitor) family.

Inhibitor of trypsin, chymotrypsin, subtilisin, etc. The sequence is that of Trypsin/subtilisin inhibitor from Amaranthus caudatus (Love-lies-bleeding).